The chain runs to 530 residues: Sugar transport protein MST6 (530 aa).

Over 1 to 18 (MAGGVVVNNGGGKDYPGK) the chain is Cytoplasmic. The chain crosses the membrane as a helical span at residues 19-39 (LTMFVLFACIVAATGGLIFGY). Topologically, residues 40–81 (DIGISGGVTSMNPFLIKFFPSVYRKEQAAEKNQSNQYCKFDS) are extracellular. Residues 82 to 102 (PLLTMFTSSLYLAALVASFFA) traverse the membrane as a helical segment. The Cytoplasmic portion of the chain corresponds to 103–119 (STVTRVAGRKWSMFGGG). A helical membrane pass occupies residues 120–140 (VTFLVGAALNGAAKNVLMLIL). Residues 141 to 142 (GR) lie on the Extracellular side of the membrane. Residues 143 to 163 (VLLGVGVGFANQSVPLYLSEM) form a helical membrane-spanning segment. The Cytoplasmic portion of the chain corresponds to 164–169 (APARLR). The helical transmembrane segment at 170–190 (GMLNIGFQLMITIGILCANLI) threads the bilayer. Topologically, residues 191 to 204 (NYGTAKIKGGWGWR) are extracellular. The helical transmembrane segment at 205–225 (VSLALAAVPAAIIAVGALFLP) threads the bilayer. The Cytoplasmic segment spans residues 226–291 (DTPNSLIDRG…YRPQLTMAIA (66 aa)). A helical transmembrane segment spans residues 292-312 (IPLFQQLTGINVIMFYAPVLF). Over 313-323 (KTLGFADDASL) the chain is Extracellular. The helical transmembrane segment at 324–344 (MSAVITGLVNVFATFVSIVTV) threads the bilayer. The Cytoplasmic portion of the chain corresponds to 345-359 (DRLGRRKLFLQGGTQ). The chain crosses the membrane as a helical span at residues 360–380 (MLACQIVVGSLIGAKFGFSGV). At 381–388 (ADIPKAYA) the chain is on the extracellular side. Residues 389-409 (AFVVLFICAYVAGFAWSWGPL) form a helical membrane-spanning segment. The Cytoplasmic portion of the chain corresponds to 410 to 428 (GWLVPSEIFPLEIRSAGQS). A helical membrane pass occupies residues 429–449 (INVSVNMLFTFIIAQAFLPML). The Extracellular portion of the chain corresponds to 450 to 453 (CRFK). The chain crosses the membrane as a helical span at residues 454-474 (FILFFFFGAWVVIMTLFVAFF). At 475 to 530 (LPETKNVPIEEMVLVWKSHWYWGRFIRDEDVHVGADVEMPAAGNRNGKVDPAKLAN) the chain is on the cytoplasmic side.

The protein belongs to the major facilitator superfamily. Sugar transporter (TC 2.A.1.1) family. As to expression, expressed in leaf blades, leaf sheaths, anthers, ovaries and embryos. Expressed at low levels in roots and shoots.

The protein localises to the cell membrane. Its function is as follows. Mediates active uptake of hexoses by sugar:proton symport. Can transport glucose, fructose, mannose, galactose, xylose and ribose. This Oryza sativa subsp. japonica (Rice) protein is Sugar transport protein MST6.